A 23-amino-acid polypeptide reads, in one-letter code: SVIELGKMILQETGKNPVTHYGA.

Contains 7 disulfide bonds. As to expression, expressed by the venom gland.

It localises to the secreted. Its function is as follows. Snake venom phospholipase A2 homolog that lacks catalytic activity. Shows myotoxic activities. Induces local edema a few hours after injection (5-10 ug) in the hind paw. The sequence is that of Basic phospholipase A2 homolog CTs-K49c from Trimeresurus stejnegeri (Chinese green tree viper).